Reading from the N-terminus, the 363-residue chain is dTDP-L-rhamnose 4-epimerase (363 aa).

Residues 18–24 (GGAGFIG), 68–69 (DV), and 90–94 (LAAET) contribute to the NAD(+) site. Substrate is bound by residues Ser-136 and Tyr-191. Residues Tyr-191 and Lys-195 each coordinate NAD(+). Tyr-191 functions as the Proton acceptor in the catalytic mechanism. Positions 220 and 259 each coordinate substrate.

Belongs to the NAD(P)-dependent epimerase/dehydratase family. Requires NAD(+) as cofactor.

It catalyses the reaction dTDP-6-deoxy-beta-L-talose = dTDP-beta-L-rhamnose. It functions in the pathway bacterial outer membrane biogenesis; LPS O-antigen biosynthesis. In terms of biological role, catalyzes the interconvertion of dTDP-6-deoxy-L-talose and dTDP-L-rhamnose. The equilibrium is strongly toward dTDP-L-rhamnose. The sequence is that of dTDP-L-rhamnose 4-epimerase (wbiB) from Burkholderia thailandensis (strain ATCC 700388 / DSM 13276 / CCUG 48851 / CIP 106301 / E264).